The following is a 608-amino-acid chain: Serine/threonine-protein kinase ROP17 (608 aa).

Positions 1–21 (MELVLCFVIITISGVIRESSA) are cleaved as a signal peptide. N-linked (GlcNAc...) asparagine glycosylation is present at N76. A Protein kinase domain is found at 283–579 (LKKRGFLGGG…QQALEQFSLL (297 aa)). ATP is bound by residues 289–297 (LGGGGFGLV) and K312. Residue D436 is the Proton acceptor of the active site.

This sequence belongs to the protein kinase superfamily. Ser/Thr protein kinase family. Interacts with ROP5; interaction with ROP5 does not affect kinase activity. Interacts with human BCL2; the interaction probably promotes BCL2 phosphorylation and degradation.

Its subcellular location is the secreted. It localises to the cytoplasmic vesicle. The protein resides in the secretory vesicle. It is found in the rhoptry. The protein localises to the parasitophorous vacuole membrane. It catalyses the reaction L-threonyl-[protein] + ATP = O-phospho-L-threonyl-[protein] + ADP + H(+). The catalysed reaction is L-seryl-[protein] + ATP = O-phospho-L-seryl-[protein] + ADP + H(+). In terms of biological role, protein kinase. Virulence factor. Promotes migration of Toxoplasma-infected macrophages through collagen matrix, facilitating parasite transport through tissues and systemic dissemination. Plays a role in the translocation of dense granule effectors, such as GRA16 and GRA24, across the parasitophorous vacuole membrane in Toxoplasma-infected host cells. Phosphorylates mouse IRGB6 (TGTP1/TGTP2), an immunity-related GTPase (IRG) that protects mice from infection by certain intracellular pathogens; the phosphorylation leads to the disassembly of IRGB6 polymers into monomers and dimers. May modulate gene expression in human cells. Promotes autophagy in human cells via modulation of the BCL2-BECN1 pathway. In Toxoplasma gondii, this protein is Serine/threonine-protein kinase ROP17.